Reading from the N-terminus, the 198-residue chain is UPF0301 protein Tfu_2389 (198 aa).

Belongs to the UPF0301 (AlgH) family.

The protein is UPF0301 protein Tfu_2389 of Thermobifida fusca (strain YX).